The chain runs to 369 residues: Protein VP6 (369 aa).

Disordered regions lie at residues 17-169 and 184-208; these read KREL…LQGR and LDRI…GGDR. Over residues 29–68 the composition is skewed to basic and acidic residues; the sequence is LREKGSTEAKSKLKEDGEKKNKSEKEENKIHDDRRVESQK. Over residues 92–111 the composition is skewed to gly residues; that stretch reads TGGGDGSAGARTGIGGGGVG. Basic and acidic residues-rich tracts occupy residues 137–148 and 196–208; these read TGADRVANDDAT and TEGE…GGDR.

Belongs to the orbivirus VP6 family.

It localises to the virion. The sequence is that of Protein VP6 (Segment-9) from African horse sickness virus (AHSV).